The primary structure comprises 378 residues: Chaperone protein DnaJ (378 aa).

One can recognise a J domain in the interval 5-70; sequence DYYEVLGVAK…QKRAAYDQYG (66 aa). A CR-type zinc finger spans residues 138 to 216; it reads GYDTQIRVPS…CHGSGKVKET (79 aa). Residues Cys151, Cys154, Cys168, Cys171, Cys190, Cys193, Cys204, and Cys207 each coordinate Zn(2+). CXXCXGXG motif repeat units lie at residues 151-158, 168-175, 190-197, and 204-211; these read CEVCHGSG, CPTCHGQG, CPKCHGTG, and CVHCHGSG.

This sequence belongs to the DnaJ family. In terms of assembly, homodimer. It depends on Zn(2+) as a cofactor.

Its subcellular location is the cytoplasm. Participates actively in the response to hyperosmotic and heat shock by preventing the aggregation of stress-denatured proteins and by disaggregating proteins, also in an autonomous, DnaK-independent fashion. Unfolded proteins bind initially to DnaJ; upon interaction with the DnaJ-bound protein, DnaK hydrolyzes its bound ATP, resulting in the formation of a stable complex. GrpE releases ADP from DnaK; ATP binding to DnaK triggers the release of the substrate protein, thus completing the reaction cycle. Several rounds of ATP-dependent interactions between DnaJ, DnaK and GrpE are required for fully efficient folding. Also involved, together with DnaK and GrpE, in the DNA replication of plasmids through activation of initiation proteins. This chain is Chaperone protein DnaJ, found in Burkholderia ambifaria (strain MC40-6).